Here is a 633-residue protein sequence, read N- to C-terminus: Pesticidal crystal protein Cry2Ab (633 aa).

Belongs to the delta endotoxin family.

Its function is as follows. Promotes colloidosmotic lysis by binding to the midgut epithelial cells of lepidopteran (Manduca sexta) larvae. This chain is Pesticidal crystal protein Cry2Ab (cry2Ab), found in Bacillus thuringiensis subsp. kurstaki.